A 245-amino-acid chain; its full sequence is PF03932 family protein CutC (245 aa).

Belongs to the CutC family.

It localises to the cytoplasm. The sequence is that of PF03932 family protein CutC from Sinorhizobium medicae (strain WSM419) (Ensifer medicae).